Reading from the N-terminus, the 414-residue chain is Na(+)/H(+) antiporter NhaA (414 aa).

11 consecutive transmembrane segments (helical) span residues 22 to 42 (VGGF…NSPF), 61 to 81 (LHLT…FFVV), 101 to 121 (MLPI…YAAF), 131 to 151 (GWGI…AVVG), 171 to 191 (LGAI…LPLI), 215 to 235 (SAAL…WALV), 239 to 259 (GVHA…VPLA), 281 to 301 (VLPV…LGAV), 308 to 328 (LGII…GSWV), 343 to 363 (WIDI…SLLI), and 379 to 399 (KAGV…VLAV).

Belongs to the NhaA Na(+)/H(+) (TC 2.A.33) antiporter family.

The protein localises to the cell membrane. The enzyme catalyses Na(+)(in) + 2 H(+)(out) = Na(+)(out) + 2 H(+)(in). Functionally, na(+)/H(+) antiporter that extrudes sodium in exchange for external protons. The protein is Na(+)/H(+) antiporter NhaA of Thermobifida fusca (strain YX).